Consider the following 280-residue polypeptide: Nucleotide-binding protein Swoo_4243 (280 aa).

Residue 8–15 coordinates ATP; it reads GRSGSGKS. 56–59 serves as a coordination point for GTP; the sequence is DVRN.

The protein belongs to the RapZ-like family.

Displays ATPase and GTPase activities. This Shewanella woodyi (strain ATCC 51908 / MS32) protein is Nucleotide-binding protein Swoo_4243.